The primary structure comprises 336 residues: Holliday junction branch migration complex subunit RuvB (336 aa).

A large ATPase domain (RuvB-L) region spans residues 4–184 (ADRLVSADSS…FGIVQRLEFY (181 aa)). ATP-binding positions include isoleucine 23, arginine 24, glycine 65, lysine 68, threonine 69, threonine 70, 131–133 (EDY), arginine 174, tyrosine 184, and arginine 221. Residue threonine 69 participates in Mg(2+) binding. The interval 185–255 (QIPDLQHIVS…IAAQALDMLN (71 aa)) is small ATPAse domain (RuvB-S). The interval 258–336 (AEGFDYMDRK…HFGITPPEMP (79 aa)) is head domain (RuvB-H). DNA is bound by residues arginine 294, arginine 313, and arginine 318.

Belongs to the RuvB family. Homohexamer. Forms an RuvA(8)-RuvB(12)-Holliday junction (HJ) complex. HJ DNA is sandwiched between 2 RuvA tetramers; dsDNA enters through RuvA and exits via RuvB. An RuvB hexamer assembles on each DNA strand where it exits the tetramer. Each RuvB hexamer is contacted by two RuvA subunits (via domain III) on 2 adjacent RuvB subunits; this complex drives branch migration. In the full resolvosome a probable DNA-RuvA(4)-RuvB(12)-RuvC(2) complex forms which resolves the HJ.

The protein resides in the cytoplasm. It carries out the reaction ATP + H2O = ADP + phosphate + H(+). In terms of biological role, the RuvA-RuvB-RuvC complex processes Holliday junction (HJ) DNA during genetic recombination and DNA repair, while the RuvA-RuvB complex plays an important role in the rescue of blocked DNA replication forks via replication fork reversal (RFR). RuvA specifically binds to HJ cruciform DNA, conferring on it an open structure. The RuvB hexamer acts as an ATP-dependent pump, pulling dsDNA into and through the RuvAB complex. RuvB forms 2 homohexamers on either side of HJ DNA bound by 1 or 2 RuvA tetramers; 4 subunits per hexamer contact DNA at a time. Coordinated motions by a converter formed by DNA-disengaged RuvB subunits stimulates ATP hydrolysis and nucleotide exchange. Immobilization of the converter enables RuvB to convert the ATP-contained energy into a lever motion, pulling 2 nucleotides of DNA out of the RuvA tetramer per ATP hydrolyzed, thus driving DNA branch migration. The RuvB motors rotate together with the DNA substrate, which together with the progressing nucleotide cycle form the mechanistic basis for DNA recombination by continuous HJ branch migration. Branch migration allows RuvC to scan DNA until it finds its consensus sequence, where it cleaves and resolves cruciform DNA. The polypeptide is Holliday junction branch migration complex subunit RuvB (Klebsiella pneumoniae subsp. pneumoniae (strain ATCC 700721 / MGH 78578)).